We begin with the raw amino-acid sequence, 398 residues long: Pheromone receptor transcription activator (398 aa).

3 disordered regions span residues 1–30, 101–125, and 254–317; these read MMDERKLSNFQIDGEKAYTGSSQGNSYLED, TDQNESQASQAKQSSAQLSDSESGY, and PSTG…DRPP. The MADS-box domain maps to 20 to 74; it reads GSSQGNSYLEDRQKRQNTFTKRKAGIFKKANELALLTGSEVMVLVVSETGLVHTF. The span at 106–121 shows a compositional bias: low complexity; it reads SQASQAKQSSAQLSDS. 2 stretches are compositionally biased toward polar residues: residues 262 to 273 and 282 to 294; these read TTGQHSVNSPPS and NKSFATRSEPQTP.

The protein resides in the nucleus. Functionally, in response to mating-pheromone signaling or nitrogen starvation, it interacts with mat1-Pc. This activates the expression of one of two mating-type-specific genes sxa2 or map3, which leads to inactivation of the P-factor. May also interact with mat1-Mc. This chain is Pheromone receptor transcription activator (map1), found in Schizosaccharomyces pombe (strain 972 / ATCC 24843) (Fission yeast).